The following is a 213-amino-acid chain: Serine protease inhibitor 5 (213 aa).

An N-terminal signal peptide occupies residues Met1–Thr22. Residues Ser23 to Asn28 constitute a propeptide that is removed on maturation. The Vacuolar targeting signal motif lies at Asn25 to Pro30. Intrachain disulfides connect Cys76-Cys125 and Cys174-Cys183.

The protein belongs to the protease inhibitor I3 (leguminous Kunitz-type inhibitor) family.

The protein resides in the vacuole. In terms of biological role, inhibitor of trypsin (serine protease). Protects the plant by inhibiting proteases of invading organisms. In Solanum tuberosum (Potato), this protein is Serine protease inhibitor 5.